A 349-amino-acid chain; its full sequence is S-adenosylmethionine:tRNA ribosyltransferase-isomerase (349 aa).

The protein belongs to the QueA family. As to quaternary structure, monomer.

It localises to the cytoplasm. The enzyme catalyses 7-aminomethyl-7-carbaguanosine(34) in tRNA + S-adenosyl-L-methionine = epoxyqueuosine(34) in tRNA + adenine + L-methionine + 2 H(+). Its pathway is tRNA modification; tRNA-queuosine biosynthesis. Its function is as follows. Transfers and isomerizes the ribose moiety from AdoMet to the 7-aminomethyl group of 7-deazaguanine (preQ1-tRNA) to give epoxyqueuosine (oQ-tRNA). The chain is S-adenosylmethionine:tRNA ribosyltransferase-isomerase from Pseudomonas putida (strain ATCC 700007 / DSM 6899 / JCM 31910 / BCRC 17059 / LMG 24140 / F1).